Consider the following 378-residue polypeptide: Prolargin (378 aa).

The signal sequence occupies residues 1-21; that stretch reads MRASFFWLLPLLLILASVAQG. Residues 22–62 are disordered; sequence QPTRPKPGIRRKPKPRPTPRFPQAPEPAEPTDLPPPLPPGP. The span at 28-38 shows a compositional bias: basic residues; the sequence is PGIRRKPKPRP. The segment covering 39-62 has biased composition (pro residues); it reads TPRFPQAPEPAEPTDLPPPLPPGP. LRR repeat units lie at residues 91–110, 111–134, 135–158, 159–179, 180–203, 204–229, 230–250, 251–274, 275–299, 300–319, 320–358, and 359–378; these read RRVP…NNFI, TELP…NNRI, RKVD…KNQL, EEVP…QNLI, SRIP…HNRL, SDGV…HNIL, RKMP…SNKI, ETIP…YNKL, SDRG…HNKI, SNVP…NNSI, EKIN…GNFL, and KPPI…SVVI. Asn120 is a glycosylation site (N-linked (GlcNAc...) asparagine). N-linked (GlcNAc...) asparagine glycosylation is found at Asn285, Asn316, and Asn323. Cys328 and Cys369 are joined by a disulfide.

It belongs to the small leucine-rich proteoglycan (SLRP) family. SLRP class II subfamily. Binds the basement membrane heparan sulfate proteoglycan perlecan and triple helical collagens type I and type II. Post-translationally, glycosylated; contains heparan sulfate. As to expression, expressed in cartilage throughout both fetal development and postnatal life. It is also expressed in the developing embryo prior to skeletogenesis. In adult, highest expression in lung, lower levels in cardiac and skeletal muscle.

The protein resides in the secreted. It localises to the extracellular space. It is found in the extracellular matrix. Its function is as follows. May anchor basement membranes to the underlying connective tissue. The chain is Prolargin (Prelp) from Mus musculus (Mouse).